Reading from the N-terminus, the 404-residue chain is Putative CBL-interacting protein kinase 27 (404 aa).

Residues 11-266 (YEMGRVLGHG…VAGLLETPWF (256 aa)) enclose the Protein kinase domain. Residues 17–25 (LGHGNFGRV) and K40 contribute to the ATP site. The active-site Proton acceptor is D134. The tract at residues 152–181 (DFGLSALACHARPDGLLHTACGTPAYVAPE) is activation loop. One can recognise an NAF domain in the interval 294-321 (DKDEPPEVLNAFHLISLSEGFDLSPLFE). Residues 335–356 (AGGTRFATREAASGVVARLEAL) are PPI.

The protein belongs to the protein kinase superfamily. CAMK Ser/Thr protein kinase family. SNF1 subfamily. It depends on Mn(2+) as a cofactor.

The catalysed reaction is L-seryl-[protein] + ATP = O-phospho-L-seryl-[protein] + ADP + H(+). It catalyses the reaction L-threonyl-[protein] + ATP = O-phospho-L-threonyl-[protein] + ADP + H(+). In terms of biological role, CIPK serine-threonine protein kinases interact with CBL proteins. Binding of a CBL protein to the regulatory NAF domain of CIPK protein lead to the activation of the kinase in a calcium-dependent manner. This Oryza sativa subsp. japonica (Rice) protein is Putative CBL-interacting protein kinase 27 (CIPK27).